Here is a 182-residue protein sequence, read N- to C-terminus: CDP-diacylglycerol--glycerol-3-phosphate 3-phosphatidyltransferase (182 aa).

Residues 1 to 12 (MQLNIPTWLTLF) are Cytoplasmic-facing. The chain crosses the membrane as a helical span at residues 13–37 (RVVMIPFFVLAFYLPFKWAPLCCAL). Topologically, residues 38–60 (IFVLAAVTDWFDGFLARRWKQTT) are periplasmic. Residues 61–81 (RFGAFLDPVADKVMVAMALVL) traverse the membrane as a helical segment. Residues 82–86 (VAEHF) lie on the Cytoplasmic side of the membrane. A helical membrane pass occupies residues 87-107 (HSWWITLPAATMIAREIIISA). Topologically, residues 108–145 (LREWMAEIGKRSSVAVSWIGKVKTTAQMLALVTLLWRP) are periplasmic. A helical membrane pass occupies residues 146-168 (DDIVSGIGIAALYVAAVLTFWSM). Residues 169-181 (FQYLYAARHDLFE) lie on the Cytoplasmic side of the membrane.

It belongs to the CDP-alcohol phosphatidyltransferase class-I family.

It is found in the cell inner membrane. It catalyses the reaction a CDP-1,2-diacyl-sn-glycerol + sn-glycerol 3-phosphate = a 1,2-diacyl-sn-glycero-3-phospho-(1'-sn-glycero-3'-phosphate) + CMP + H(+). It participates in phospholipid metabolism; phosphatidylglycerol biosynthesis; phosphatidylglycerol from CDP-diacylglycerol: step 1/2. Functionally, catalyzes the conversion of cytidine diphosphate diacylglycerol (CDP-DG) and glycerol 3-phosphate into phosphatidylglycerol. Essential for the synthesis of anionic phospholipids, thereby playing a role in balancing the ratio of zwitterionic and anionic phospholipids, which is thought to be important for normal membrane function. This chain is CDP-diacylglycerol--glycerol-3-phosphate 3-phosphatidyltransferase, found in Sodalis glossinidius (strain morsitans).